A 337-amino-acid chain; its full sequence is Histidine N-acetyltransferase (337 aa).

Positions 1 to 2 are cleaved as a propeptide — removed in mature form; that stretch reads MK. The N-acetyltransferase domain maps to 21–157; sequence LQFSVATEED…GILLMRFRAE (137 aa).

In terms of tissue distribution, expressed exclusively in the brain and lens.

The catalysed reaction is L-histidine + acetyl-CoA = N(alpha)-acetyl-L-histidine + CoA + H(+). Functionally, enzyme responsible for the N-acetyl-histidine (NAH) synthesis, which is a major constituent of brain and lens of ectothermic vertebrates. This Oreochromis niloticus (Nile tilapia) protein is Histidine N-acetyltransferase (hisat).